The following is a 497-amino-acid chain: Probable malate:quinone oxidoreductase (497 aa).

The protein belongs to the MQO family. Requires FAD as cofactor.

The catalysed reaction is (S)-malate + a quinone = a quinol + oxaloacetate. The protein operates within carbohydrate metabolism; tricarboxylic acid cycle; oxaloacetate from (S)-malate (quinone route): step 1/1. This is Probable malate:quinone oxidoreductase from Rhodopseudomonas palustris (strain TIE-1).